The following is a 38-amino-acid chain: Photosystem II reaction center protein L (38 aa).

The chain crosses the membrane as a helical span at residues 17-37 (SLYWGLLLIFVLAVLFSNYFF).

Belongs to the PsbL family. In terms of assembly, PSII is composed of 1 copy each of membrane proteins PsbA, PsbB, PsbC, PsbD, PsbE, PsbF, PsbH, PsbI, PsbJ, PsbK, PsbL, PsbM, PsbT, PsbX, PsbY, PsbZ, Psb30/Ycf12, at least 3 peripheral proteins of the oxygen-evolving complex and a large number of cofactors. It forms dimeric complexes.

It localises to the plastid. The protein localises to the chloroplast thylakoid membrane. One of the components of the core complex of photosystem II (PSII). PSII is a light-driven water:plastoquinone oxidoreductase that uses light energy to abstract electrons from H(2)O, generating O(2) and a proton gradient subsequently used for ATP formation. It consists of a core antenna complex that captures photons, and an electron transfer chain that converts photonic excitation into a charge separation. This subunit is found at the monomer-monomer interface and is required for correct PSII assembly and/or dimerization. The sequence is that of Photosystem II reaction center protein L from Ananas comosus (Pineapple).